A 199-amino-acid polypeptide reads, in one-letter code: MAGETVITVVGNLVDDPELRFTPSGAAVAKFRVASTPRTFDRQTNEWKDGESLFLTCSVWRQAAENVAESLQRGMRVIVQGRLKQRSYEDREGVKRTVYELDVDEVGASLRSATAKVTKTSGQGRGGQGGYGGGGGGQGGGGWGGGPGGGQQGGGAPADDPWATGGAPAGGQQGGGGQGGGGWGGGSGGGGGYSDEPPF.

An SSB domain is found at M1 to L110. Positions T114–F199 are disordered. A compositionally biased stretch (gly residues) spans Q123–A156. The span at P157–G166 shows a compositional bias: low complexity. The span at A167–Y193 shows a compositional bias: gly residues.

Homotetramer. In terms of processing, phosphorylated on tyrosine residue(s) when expressed in E.coli.

The protein resides in the cytoplasm. It localises to the nucleoid. The chain is Single-stranded DNA-binding protein 2 (ssb2) from Streptomyces coelicolor (strain ATCC BAA-471 / A3(2) / M145).